The following is an 88-amino-acid chain: UPF0297 protein SPCG_0205 (88 aa).

The protein belongs to the UPF0297 family.

This Streptococcus pneumoniae (strain CGSP14) protein is UPF0297 protein SPCG_0205.